A 51-amino-acid polypeptide reads, in one-letter code: Large ribosomal subunit protein eL39 (51 aa).

This sequence belongs to the eukaryotic ribosomal protein eL39 family.

The chain is Large ribosomal subunit protein eL39 from Hyperthermus butylicus (strain DSM 5456 / JCM 9403 / PLM1-5).